Here is a 519-residue protein sequence, read N- to C-terminus: MQGGQRPHLLLLLLAVCLGAQSRNQEERLLADLMRNYDPHLRPAERDSDVVNVSLKLTLTNLISLNEREEALTTNVWIEMQWCDYRLRWDPKDYEGLWILRVPSTMVWRPDIVLENNVDGVFEVALYCNVLVSPDGCIYWLPPAIFRSSCSISVTYFPFDWQNCSLIFQSQTYSTSEINLQLSQEDGQAIEWIFIDPEAFTENGEWAIRHRPAKMLLDSVAPAEEAGHQKVVFYLLIQRKPLFYVINIIAPCVLISSVAILIYFLPAKAGGQKCTVATNVLLAQTVFLFLVAKKVPETSQAVPLISKYLTFLMVVTILIVVNSVVVLNVSLRSPHTHSMARGVRKLFLRLLPQLLRMHVRPLAPAAVQDARFRLQNGSSSGWPIMAREEGDLCLPRSELLFRQRQRNGLVQAVLEKLENGPEVRQSQEFCGSLKQASPAIQACVDACNLMARARRQQSHFDSGNEEWLLVGRVLDRVCFLAMLSLFICGTAGIFLMAHYNQVPDLPFPGDPRPYLPLPD.

An N-terminal signal peptide occupies residues 1–22 (MQGGQRPHLLLLLLAVCLGAQS). Over 23 to 240 (RNQEERLLAD…VVFYLLIQRK (218 aa)) the chain is Extracellular. N-linked (GlcNAc...) asparagine glycans are attached at residues asparagine 52 and asparagine 163. A disulfide bond links cysteine 150 and cysteine 164. A run of 3 helical transmembrane segments spans residues 241–265 (PLFYVINIIAPCVLISSVAILIYFL), 274–292 (CTVATNVLLAQTVFLFLVA), and 308–329 (YLTFLMVVTILIVVNSVVVLNV). Residues 330 to 476 (SLRSPHTHSM…WLLVGRVLDR (147 aa)) lie on the Cytoplasmic side of the membrane. Residues 477-497 (VCFLAMLSLFICGTAGIFLMA) traverse the membrane as a helical segment.

Belongs to the ligand-gated ion channel (TC 1.A.9) family. Acetylcholine receptor (TC 1.A.9.1) subfamily. Gamma/CHRNG sub-subfamily. In terms of assembly, pentamer of two alpha chains, and one each of the beta, delta, and gamma (in immature muscle) or epsilon (in mature muscle) chains. As to expression, at least in myotubes of skeletal muscle.

The protein resides in the postsynaptic cell membrane. Its subcellular location is the cell membrane. It catalyses the reaction K(+)(in) = K(+)(out). The catalysed reaction is Na(+)(in) = Na(+)(out). After binding acetylcholine, the AChR responds by an extensive change in conformation that affects all subunits and leads to opening of an ion-conducting channel across the plasma membrane. This is Acetylcholine receptor subunit gamma (Chrng) from Mus musculus (Mouse).